Reading from the N-terminus, the 354-residue chain is Nicotinate-nucleotide--dimethylbenzimidazole phosphoribosyltransferase (354 aa).

Glu-313 functions as the Proton acceptor in the catalytic mechanism.

This sequence belongs to the CobT family.

The enzyme catalyses 5,6-dimethylbenzimidazole + nicotinate beta-D-ribonucleotide = alpha-ribazole 5'-phosphate + nicotinate + H(+). It participates in nucleoside biosynthesis; alpha-ribazole biosynthesis; alpha-ribazole from 5,6-dimethylbenzimidazole: step 1/2. Functionally, catalyzes the synthesis of alpha-ribazole-5'-phosphate from nicotinate mononucleotide (NAMN) and 5,6-dimethylbenzimidazole (DMB). The polypeptide is Nicotinate-nucleotide--dimethylbenzimidazole phosphoribosyltransferase (Ralstonia nicotianae (strain ATCC BAA-1114 / GMI1000) (Ralstonia solanacearum)).